Reading from the N-terminus, the 115-residue chain is Cell division protein FtsL (115 aa).

Residues M1–Q25 are Cytoplasmic-facing. The helical transmembrane segment at G26–F46 threads the bilayer. The Periplasmic portion of the chain corresponds to K47–E115.

It belongs to the FtsL family. As to quaternary structure, part of a complex composed of FtsB, FtsL and FtsQ.

The protein resides in the cell inner membrane. Its function is as follows. Essential cell division protein. May link together the upstream cell division proteins, which are predominantly cytoplasmic, with the downstream cell division proteins, which are predominantly periplasmic. The protein is Cell division protein FtsL of Coxiella burnetii (strain RSA 493 / Nine Mile phase I).